The primary structure comprises 468 residues: 6-phospho-beta-galactosidase (468 aa).

Residues Gln19, His116, Asn159, Glu160, and Asn297 each contribute to the D-galactose 6-phosphate site. Residue Glu160 is the Proton donor of the active site. The active-site Nucleophile is Glu375. Ser428, Trp429, Lys435, and Tyr437 together coordinate D-galactose 6-phosphate.

This sequence belongs to the glycosyl hydrolase 1 family.

The catalysed reaction is a 6-phospho-beta-D-galactoside + H2O = D-galactose 6-phosphate + an alcohol. The protein operates within carbohydrate metabolism; lactose degradation; D-galactose 6-phosphate and beta-D-glucose from lactose 6-phosphate: step 1/1. The protein is 6-phospho-beta-galactosidase of Streptococcus pyogenes serotype M18 (strain MGAS8232).